A 557-amino-acid polypeptide reads, in one-letter code: Protein Red (557 aa).

The disordered stretch occupies residues 1 to 84; that stretch reads MPERDSEPFS…RKKKSYYAKL (84 aa). Positions 16–25 are enriched in basic and acidic residues; the sequence is DGHDVDDPHS. The segment covering 42–53 has biased composition (low complexity); sequence TPRAAPTSAPPS. An N6-acetyllysine mark is found at K98 and K137. A Glycyl lysine isopeptide (Lys-Gly) (interchain with G-Cter in SUMO2) cross-link involves residue K151. The segment at 181 to 205 is disordered; it reads KEKEEEELMEKPQKETKKDEDPENK. S287 bears the Phosphoserine mark. Basic residues predominate over residues 294–303; the sequence is RNKKLKKKDK. Residues 294-402 are disordered; sequence RNKKLKKKDK…PIDVDKGPGS (109 aa). Residues 304-313 are compositionally biased toward basic and acidic residues; sequence GKLEEKKPPE. Glycyl lysine isopeptide (Lys-Gly) (interchain with G-Cter in SUMO2) cross-links involve residues K310 and K331. The segment covering 332–398 has biased composition (basic and acidic residues); it reads TPRDKERERY…VDDEPIDVDK (67 aa). A run of 17 repeats spans residues 342-343, 344-345, 346-347, 348-349, 350-351, 352-353, 354-355, 356-357, 358-359, 360-361, 362-363, 364-365, 366-367, 368-369, 370-371, 372-373, and 374-375. The interval 342–375 is 17 X 2 AA tandem repeats of R-[ED]; the sequence is RERERDRERDRDRDRERERERDRERERERDRERE. Glycyl lysine isopeptide (Lys-Gly) (interchain with G-Cter in SUMO2) cross-links involve residues K386, K388, K404, and K408. A phosphoserine mark is found at S417 and S460. At T485 the chain carries Phosphothreonine. Glycyl lysine isopeptide (Lys-Gly) (interchain with G-Cter in SUMO2) cross-links involve residues K496, K501, and K509. The residue at position 536 (S536) is a Phosphoserine. Residues K541, K543, K544, and K553 each participate in a glycyl lysine isopeptide (Lys-Gly) (interchain with G-Cter in SUMO2) cross-link.

This sequence belongs to the RED family. As to quaternary structure, component of the spliceosome B complex. Interacts with SMU1. Interacts with MAD1L1. May interact with DHX15.

The protein localises to the nucleus. Its subcellular location is the nucleoplasm. It localises to the chromosome. It is found in the cytoplasm. The protein resides in the cytoskeleton. The protein localises to the spindle pole. In terms of biological role, involved in pre-mRNA splicing as a component of the spliceosome. Auxiliary spliceosomal protein that regulates selection of alternative splice sites in a small set of target pre-mRNA species. Required for normal mitotic cell cycle progression. Recruits MAD1L1 and MAD2L1 to kinetochores, and is required to trigger the spindle assembly checkpoint. Required for normal accumulation of SMU1. The sequence is that of Protein Red (IK) from Pongo abelii (Sumatran orangutan).